Here is a 260-residue protein sequence, read N- to C-terminus: Late transcription factor 1 (260 aa).

The protein belongs to the chordopoxvirinae VLTF-1 family. As to quaternary structure, interacts with the late transcription factors VLTF-2 and VLTF-3. Interacts with the late transcription elongation factor H5/VLTF-4. Interacts with itself.

Its function is as follows. Associates with RNA polymerase to initiate transcription from late gene promoters. The protein is Late transcription factor 1 (VLTF1) of Vertebrata (FPV).